We begin with the raw amino-acid sequence, 157 residues long: Transcription elongation factor GreA (157 aa).

Residues 47-75 (ENAEYDAAREKQGQIEDRITELENILSNA) adopt a coiled-coil conformation.

It belongs to the GreA/GreB family.

Necessary for efficient RNA polymerase transcription elongation past template-encoded arresting sites. The arresting sites in DNA have the property of trapping a certain fraction of elongating RNA polymerases that pass through, resulting in locked ternary complexes. Cleavage of the nascent transcript by cleavage factors such as GreA or GreB allows the resumption of elongation from the new 3'terminus. GreA releases sequences of 2 to 3 nucleotides. This is Transcription elongation factor GreA from Mycoplasmopsis pulmonis (strain UAB CTIP) (Mycoplasma pulmonis).